The chain runs to 641 residues: Fructose-1,6-bisphosphatase class 3 (641 aa).

Belongs to the FBPase class 3 family. Requires Mn(2+) as cofactor.

It carries out the reaction beta-D-fructose 1,6-bisphosphate + H2O = beta-D-fructose 6-phosphate + phosphate. The protein operates within carbohydrate biosynthesis; gluconeogenesis. The sequence is that of Fructose-1,6-bisphosphatase class 3 from Ligilactobacillus salivarius (strain UCC118) (Lactobacillus salivarius).